The sequence spans 267 residues: uncharacterized protein (267 aa).

The ABC transporter domain occupies 2–198 (LGANGAGKTT…FRNKFIVIEG (197 aa)). Residue 3 to 10 (GANGAGKT) coordinates ATP.

It belongs to the ABC transporter superfamily.

This is an uncharacterized protein from Alkalihalophilus pseudofirmus (strain ATCC BAA-2126 / JCM 17055 / OF4) (Bacillus pseudofirmus).